Here is a 457-residue protein sequence, read N- to C-terminus: Phosphomethylpyrimidine synthase (457 aa).

Substrate is bound by residues Asn-88, Met-117, Tyr-146, His-182, 204–206, 245–248, and Glu-284; these read SRG and DACR. Residue His-288 coordinates Zn(2+). Residue Tyr-311 participates in substrate binding. His-352 provides a ligand contact to Zn(2+). Positions 428, 431, and 435 each coordinate [4Fe-4S] cluster.

The protein belongs to the ThiC family. [4Fe-4S] cluster serves as cofactor.

It carries out the reaction 5-amino-1-(5-phospho-beta-D-ribosyl)imidazole + S-adenosyl-L-methionine = 4-amino-2-methyl-5-(phosphooxymethyl)pyrimidine + CO + 5'-deoxyadenosine + formate + L-methionine + 3 H(+). The protein operates within cofactor biosynthesis; thiamine diphosphate biosynthesis. Functionally, catalyzes the synthesis of the hydroxymethylpyrimidine phosphate (HMP-P) moiety of thiamine from aminoimidazole ribotide (AIR) in a radical S-adenosyl-L-methionine (SAM)-dependent reaction. The protein is Phosphomethylpyrimidine synthase of Clostridium tetani (strain Massachusetts / E88).